We begin with the raw amino-acid sequence, 493 residues long: V-type proton ATPase subunit B (493 aa).

This sequence belongs to the ATPase alpha/beta chains family. As to quaternary structure, V-ATPase is a heteromultimeric enzyme composed of a peripheral catalytic V1 complex (main components: subunits A, B, C, D, E, and F) attached to an integral membrane V0 proton pore complex (main component: the proteolipid protein).

Its subcellular location is the cytoplasmic vesicle membrane. It localises to the endosome membrane. The protein localises to the contractile vacuole membrane. Vacuolar ATPase is responsible for acidifying a variety of intracellular compartments in eukaryotic cells. The B subunit is non-catalytic but combines with other subunits to form the catalytic complex. V-ATPase is responsible for energizing electrophoretic K(+)/2H(+) antiport by generating a transmembrane voltage of more than 200 mV. The chain is V-type proton ATPase subunit B (vatB) from Dictyostelium discoideum (Social amoeba).